A 288-amino-acid chain; its full sequence is Elongation factor Ts (288 aa).

The interval 82-85 (TDFV) is involved in Mg(2+) ion dislocation from EF-Tu.

This sequence belongs to the EF-Ts family.

It is found in the cytoplasm. In terms of biological role, associates with the EF-Tu.GDP complex and induces the exchange of GDP to GTP. It remains bound to the aminoacyl-tRNA.EF-Tu.GTP complex up to the GTP hydrolysis stage on the ribosome. The chain is Elongation factor Ts from Chlorobium limicola (strain DSM 245 / NBRC 103803 / 6330).